The following is a 280-amino-acid chain: Bis(5'-nucleosyl)-tetraphosphatase, symmetrical (280 aa).

It belongs to the Ap4A hydrolase family.

It carries out the reaction P(1),P(4)-bis(5'-adenosyl) tetraphosphate + H2O = 2 ADP + 2 H(+). Its function is as follows. Hydrolyzes diadenosine 5',5'''-P1,P4-tetraphosphate to yield ADP. The polypeptide is Bis(5'-nucleosyl)-tetraphosphatase, symmetrical (Escherichia coli O17:K52:H18 (strain UMN026 / ExPEC)).